We begin with the raw amino-acid sequence, 96 residues long: Co-chaperonin GroES 1 (96 aa).

Belongs to the GroES chaperonin family. As to quaternary structure, heptamer of 7 subunits arranged in a ring. Interacts with the chaperonin GroEL.

The protein localises to the cytoplasm. Functionally, together with the chaperonin GroEL, plays an essential role in assisting protein folding. The GroEL-GroES system forms a nano-cage that allows encapsulation of the non-native substrate proteins and provides a physical environment optimized to promote and accelerate protein folding. GroES binds to the apical surface of the GroEL ring, thereby capping the opening of the GroEL channel. This chain is Co-chaperonin GroES 1, found in Vibrio cholerae serotype O1 (strain ATCC 39315 / El Tor Inaba N16961).